We begin with the raw amino-acid sequence, 204 residues long: LexA repressor (204 aa).

Positions 31-51 (VREICAKVGLSSTSTVHGHLS) form a DNA-binding region, H-T-H motif. Residues serine 128 and lysine 165 each act as for autocatalytic cleavage activity in the active site.

This sequence belongs to the peptidase S24 family. Homodimer.

It catalyses the reaction Hydrolysis of Ala-|-Gly bond in repressor LexA.. In terms of biological role, represses a number of genes involved in the response to DNA damage (SOS response), including recA and lexA. In the presence of single-stranded DNA, RecA interacts with LexA causing an autocatalytic cleavage which disrupts the DNA-binding part of LexA, leading to derepression of the SOS regulon and eventually DNA repair. The protein is LexA repressor of Clostridium acetobutylicum (strain ATCC 824 / DSM 792 / JCM 1419 / IAM 19013 / LMG 5710 / NBRC 13948 / NRRL B-527 / VKM B-1787 / 2291 / W).